The primary structure comprises 198 residues: ATP synthase subunit b (198 aa).

A helical transmembrane segment spans residues 25–45; the sequence is PLSELLIGTLAFGLLVAFFFW.

It belongs to the ATPase B chain family. F-type ATPases have 2 components, F(1) - the catalytic core - and F(0) - the membrane proton channel. F(1) has five subunits: alpha(3), beta(3), gamma(1), delta(1), epsilon(1). F(0) has three main subunits: a(1), b(2) and c(10-14). The alpha and beta chains form an alternating ring which encloses part of the gamma chain. F(1) is attached to F(0) by a central stalk formed by the gamma and epsilon chains, while a peripheral stalk is formed by the delta and b chains.

It localises to the cell membrane. F(1)F(0) ATP synthase produces ATP from ADP in the presence of a proton or sodium gradient. F-type ATPases consist of two structural domains, F(1) containing the extramembraneous catalytic core and F(0) containing the membrane proton channel, linked together by a central stalk and a peripheral stalk. During catalysis, ATP synthesis in the catalytic domain of F(1) is coupled via a rotary mechanism of the central stalk subunits to proton translocation. Functionally, component of the F(0) channel, it forms part of the peripheral stalk, linking F(1) to F(0). The chain is ATP synthase subunit b from Frankia alni (strain DSM 45986 / CECT 9034 / ACN14a).